The sequence spans 156 residues: Small ribosomal subunit protein uS7c (156 aa).

The protein belongs to the universal ribosomal protein uS7 family. As to quaternary structure, part of the 30S ribosomal subunit.

It is found in the plastid. It localises to the chloroplast. Functionally, one of the primary rRNA binding proteins, it binds directly to 16S rRNA where it nucleates assembly of the head domain of the 30S subunit. In Chlorokybus atmophyticus (Soil alga), this protein is Small ribosomal subunit protein uS7c (rps7).